The following is a 481-amino-acid chain: Serralysin B (481 aa).

Positions 1–15 (MQQNEKASLNTSAAA) are excised as a propeptide. Residue His-189 coordinates Zn(2+). Residue Glu-190 is part of the active site. Zn(2+) contacts are provided by His-193 and Tyr-230. Positions 267, 269, 271, 299, 301, 302, 304, 341, 343, 348, 350, 352, 357, 359, 361, 365, 366, 367, 368, 370, 374, 377, 379, 383, 384, 385, 386, 388, 397, 404, and 414 each coordinate Ca(2+). Hemolysin-type calcium-binding repeat units lie at residues 346–363 (IGGS…DNIL), 364–381 (QGGA…ADTL), and 382–399 (TGGA…QDST).

This sequence belongs to the peptidase M10B family. Ca(2+) is required as a cofactor. Zn(2+) serves as cofactor.

The protein resides in the secreted. The catalysed reaction is Preferential cleavage of bonds with hydrophobic residues in P1'.. The sequence is that of Serralysin B (prtB) from Dickeya chrysanthemi (Pectobacterium chrysanthemi).